Here is a 165-residue protein sequence, read N- to C-terminus: uncharacterized protein (165 aa).

Positions 1–165 (MDIKVVKGSI…EAWEKVLGLR (165 aa)) constitute a Macro domain.

This is an uncharacterized protein from Aquifex aeolicus (strain VF5).